The sequence spans 938 residues: Isoleucine--tRNA ligase (938 aa).

Positions 58–68 match the 'HIGH' region motif; that stretch reads PYANGHIHLGT. Glu565 contributes to the L-isoleucyl-5'-AMP binding site. Residues 606-610 carry the 'KMSKS' region motif; it reads KMSKS. Lys609 serves as a coordination point for ATP. Zn(2+)-binding residues include Cys905, Cys908, Cys925, and Cys928.

It belongs to the class-I aminoacyl-tRNA synthetase family. IleS type 1 subfamily. Monomer. The cofactor is Zn(2+).

Its subcellular location is the cytoplasm. It catalyses the reaction tRNA(Ile) + L-isoleucine + ATP = L-isoleucyl-tRNA(Ile) + AMP + diphosphate. Catalyzes the attachment of isoleucine to tRNA(Ile). As IleRS can inadvertently accommodate and process structurally similar amino acids such as valine, to avoid such errors it has two additional distinct tRNA(Ile)-dependent editing activities. One activity is designated as 'pretransfer' editing and involves the hydrolysis of activated Val-AMP. The other activity is designated 'posttransfer' editing and involves deacylation of mischarged Val-tRNA(Ile). The polypeptide is Isoleucine--tRNA ligase (Nitratidesulfovibrio vulgaris (strain DSM 19637 / Miyazaki F) (Desulfovibrio vulgaris)).